Consider the following 315-residue polypeptide: Methionyl-tRNA formyltransferase (315 aa).

113 to 116 contacts (6S)-5,6,7,8-tetrahydrofolate; sequence SLLP.

The protein belongs to the Fmt family.

The enzyme catalyses L-methionyl-tRNA(fMet) + (6R)-10-formyltetrahydrofolate = N-formyl-L-methionyl-tRNA(fMet) + (6S)-5,6,7,8-tetrahydrofolate + H(+). In terms of biological role, attaches a formyl group to the free amino group of methionyl-tRNA(fMet). The formyl group appears to play a dual role in the initiator identity of N-formylmethionyl-tRNA by promoting its recognition by IF2 and preventing the misappropriation of this tRNA by the elongation apparatus. The sequence is that of Methionyl-tRNA formyltransferase from Yersinia pseudotuberculosis serotype O:1b (strain IP 31758).